Consider the following 215-residue polypeptide: Myelin protein zero-like protein 2 (215 aa).

The N-terminal stretch at 1 to 26 is a signal peptide; it reads MYGKSPALVLPLLLSLQLTALCPTEA. One can recognise an Ig-like V-type domain in the interval 27–141; sequence VEIYTSGALE…DGLVGTIRLS (115 aa). Residues 27-154 lie on the Extracellular side of the membrane; the sequence is VEIYTSGALE…TVPFSEIYFL (128 aa). Residues N39 and N118 are each glycosylated (N-linked (GlcNAc...) asparagine). A disulfide bond links C47 and C123. Residues 155-175 form a helical membrane-spanning segment; sequence AVAIGSACALMIIVVIVVVLF. At 176–215 the chain is on the cytoplasmic side; that stretch reads QHFRKKRWADRADKAEGTKSKEEEKLNQGNKVSVFVEDTD. Positions 187–201 are enriched in basic and acidic residues; sequence ADKAEGTKSKEEEKL. The interval 187-215 is disordered; the sequence is ADKAEGTKSKEEEKLNQGNKVSVFVEDTD.

This sequence belongs to the myelin P0 protein family. In terms of tissue distribution, widely expressed. Expressed in the cochlea, in Deiters' cells, possibly at contact sites with the basilar membrane. Expressed in both outer and inner auditory hair cells. In the stria vascularis, detected in the basal cell layer. Not detected in thymocytes, lymphocytes, macrophage or dendritic cells.

It is found in the membrane. Mediates homophilic cell-cell adhesion. The protein is Myelin protein zero-like protein 2 (Mpzl2) of Mus musculus (Mouse).